The primary structure comprises 308 residues: Coenzyme PQQ synthesis protein B (308 aa).

It belongs to the PqqB family.

It functions in the pathway cofactor biosynthesis; pyrroloquinoline quinone biosynthesis. In terms of biological role, may be involved in the transport of PQQ or its precursor to the periplasm. The polypeptide is Coenzyme PQQ synthesis protein B (Rhodopseudomonas palustris (strain BisB5)).